Here is a 265-residue protein sequence, read N- to C-terminus: NAD kinase (265 aa).

Aspartate 45 acts as the Proton acceptor in catalysis. NAD(+) contacts are provided by residues 45–46 (DG), 122–123 (NE), arginine 148, aspartate 150, 161–166 (TAYNKS), alanine 185, and glutamine 223.

Belongs to the NAD kinase family. A divalent metal cation serves as cofactor.

It is found in the cytoplasm. It catalyses the reaction NAD(+) + ATP = ADP + NADP(+) + H(+). Functionally, involved in the regulation of the intracellular balance of NAD and NADP, and is a key enzyme in the biosynthesis of NADP. Catalyzes specifically the phosphorylation on 2'-hydroxyl of the adenosine moiety of NAD to yield NADP. This is NAD kinase from Enterococcus faecalis (strain ATCC 700802 / V583).